Consider the following 147-residue polypeptide: MRTYQPKPADVQRVWHVIDATDVVLGRLATQAATLLRGKHKPYFAPHIDTGDFVVVINAGKVALSGNKREQAQYHRHSGFPGGLRSTSYGELLDTRPQIIVEKAIKGMLPKNKLGRAQGTKLKVYAGPTHPHQAQQPTPFEIIQVAQ.

Belongs to the universal ribosomal protein uL13 family. In terms of assembly, part of the 50S ribosomal subunit.

This protein is one of the early assembly proteins of the 50S ribosomal subunit, although it is not seen to bind rRNA by itself. It is important during the early stages of 50S assembly. The polypeptide is Large ribosomal subunit protein uL13 (Frankia casuarinae (strain DSM 45818 / CECT 9043 / HFP020203 / CcI3)).